The primary structure comprises 344 residues: Protein RecA (344 aa).

Glycine 65–threonine 72 is a binding site for ATP.

The protein belongs to the RecA family.

It localises to the cytoplasm. Its function is as follows. Can catalyze the hydrolysis of ATP in the presence of single-stranded DNA, the ATP-dependent uptake of single-stranded DNA by duplex DNA, and the ATP-dependent hybridization of homologous single-stranded DNAs. It interacts with LexA causing its activation and leading to its autocatalytic cleavage. The protein is Protein RecA of Xanthomonas oryzae pv. oryzae (strain PXO99A).